A 417-amino-acid chain; its full sequence is Gamma-glutamyl phosphate reductase (417 aa).

Belongs to the gamma-glutamyl phosphate reductase family.

It localises to the cytoplasm. The catalysed reaction is L-glutamate 5-semialdehyde + phosphate + NADP(+) = L-glutamyl 5-phosphate + NADPH + H(+). Its pathway is amino-acid biosynthesis; L-proline biosynthesis; L-glutamate 5-semialdehyde from L-glutamate: step 2/2. Its function is as follows. Catalyzes the NADPH-dependent reduction of L-glutamate 5-phosphate into L-glutamate 5-semialdehyde and phosphate. The product spontaneously undergoes cyclization to form 1-pyrroline-5-carboxylate. In Streptococcus agalactiae serotype III (strain NEM316), this protein is Gamma-glutamyl phosphate reductase.